Here is a 216-residue protein sequence, read N- to C-terminus: Probable nicotinate-nucleotide adenylyltransferase (216 aa).

The protein belongs to the NadD family.

The catalysed reaction is nicotinate beta-D-ribonucleotide + ATP + H(+) = deamido-NAD(+) + diphosphate. It functions in the pathway cofactor biosynthesis; NAD(+) biosynthesis; deamido-NAD(+) from nicotinate D-ribonucleotide: step 1/1. Functionally, catalyzes the reversible adenylation of nicotinate mononucleotide (NaMN) to nicotinic acid adenine dinucleotide (NaAD). The sequence is that of Probable nicotinate-nucleotide adenylyltransferase from Desulfatibacillum aliphaticivorans.